We begin with the raw amino-acid sequence, 978 residues long: NACHT, LRR and PYD domains-containing protein 4E (978 aa).

The region spanning 1 to 93 is the Pyrin domain; that stretch reads MASFFSDFGL…MERAGREIAG (93 aa). Residues 148-471 form the NACHT domain; the sequence is HMVFLQGVAG…FHLLKSHVDH (324 aa). Position 154–161 (154–161) interacts with ATP; that stretch reads GVAGIGKS. LRR repeat units lie at residues 594–617, 694–717, 746–773, 802–825, 859–882, and 916–940; these read CSTLKKLSLSTQNILSEGQEHSYT, LLNLSLTFLSHNDVKLLCDVLNQA, SKMLKHLNLSSNNLDKGISSLSKALCHP, NKTLTHLDISFNDLKDEGLKVLCG, NQNLRNLQISNNKIEDAGVKLLCD, and CKTLLGINLQENALDHSGLVALFEA.

The protein belongs to the NLRP family.

May be involved in inflammation and recognition of cytosolic pathogen-associated molecular patterns (PAMPs) not intercepted by membrane-bound receptors. This chain is NACHT, LRR and PYD domains-containing protein 4E (Nlrp4e), found in Mus musculus (Mouse).